The following is a 715-amino-acid chain: Polyribonucleotide nucleotidyltransferase (715 aa).

2 residues coordinate Mg(2+): Asp-493 and Asp-499. Positions 560-619 constitute a KH domain; the sequence is PRMITIKINPEKIRDVIGKGGSVIRALTEETGTTIDISDDGVVTIASTSSEGMAEAKKRI. Residues 629-697 enclose the S1 motif domain; that stretch reads GQVYEGTVLK…EKGRVRLSAK (69 aa).

This sequence belongs to the polyribonucleotide nucleotidyltransferase family. Mg(2+) serves as cofactor.

It is found in the cytoplasm. The enzyme catalyses RNA(n+1) + phosphate = RNA(n) + a ribonucleoside 5'-diphosphate. Involved in mRNA degradation. Catalyzes the phosphorolysis of single-stranded polyribonucleotides processively in the 3'- to 5'-direction. The chain is Polyribonucleotide nucleotidyltransferase from Burkholderia multivorans (strain ATCC 17616 / 249).